A 600-amino-acid polypeptide reads, in one-letter code: UvrABC system protein C (600 aa).

The GIY-YIG domain maps to 15-92 (DKPGCYLMKD…IKKYQPYYNV (78 aa)). Residues 197–232 (SQVKQDLTEKMTQASMNLEFERAAEFRDQLKYIEQT) form the UVR domain.

The protein belongs to the UvrC family. Interacts with UvrB in an incision complex.

The protein resides in the cytoplasm. The UvrABC repair system catalyzes the recognition and processing of DNA lesions. UvrC both incises the 5' and 3' sides of the lesion. The N-terminal half is responsible for the 3' incision and the C-terminal half is responsible for the 5' incision. This Lactobacillus gasseri (strain ATCC 33323 / DSM 20243 / BCRC 14619 / CIP 102991 / JCM 1131 / KCTC 3163 / NCIMB 11718 / NCTC 13722 / AM63) protein is UvrABC system protein C.